The chain runs to 269 residues: Formamidopyrimidine-DNA glycosylase (269 aa).

Catalysis depends on proline 2, which acts as the Schiff-base intermediate with DNA. Glutamate 3 functions as the Proton donor in the catalytic mechanism. Lysine 57 serves as the catalytic Proton donor; for beta-elimination activity. DNA-binding residues include histidine 90, arginine 109, and lysine 150. The FPG-type zinc finger occupies 235-269; that stretch reads QVYGRKGEPCRVCGTPIVATKHAQRATFYCRHCQK. Arginine 259 (proton donor; for delta-elimination activity) is an active-site residue.

Belongs to the FPG family. As to quaternary structure, monomer. It depends on Zn(2+) as a cofactor.

It carries out the reaction Hydrolysis of DNA containing ring-opened 7-methylguanine residues, releasing 2,6-diamino-4-hydroxy-5-(N-methyl)formamidopyrimidine.. It catalyses the reaction 2'-deoxyribonucleotide-(2'-deoxyribose 5'-phosphate)-2'-deoxyribonucleotide-DNA = a 3'-end 2'-deoxyribonucleotide-(2,3-dehydro-2,3-deoxyribose 5'-phosphate)-DNA + a 5'-end 5'-phospho-2'-deoxyribonucleoside-DNA + H(+). Involved in base excision repair of DNA damaged by oxidation or by mutagenic agents. Acts as a DNA glycosylase that recognizes and removes damaged bases. Has a preference for oxidized purines, such as 7,8-dihydro-8-oxoguanine (8-oxoG). Has AP (apurinic/apyrimidinic) lyase activity and introduces nicks in the DNA strand. Cleaves the DNA backbone by beta-delta elimination to generate a single-strand break at the site of the removed base with both 3'- and 5'-phosphates. This chain is Formamidopyrimidine-DNA glycosylase, found in Salmonella newport (strain SL254).